We begin with the raw amino-acid sequence, 230 residues long: Response regulator MprA (230 aa).

The Response regulatory domain occupies 4-118 (RILVVDDDRA…ELLARMRALL (115 aa)). Asp48 carries the post-translational modification 4-aspartylphosphate. The segment at residues 129–227 (SMAMRFSDLT…VRGVGYVLRE (99 aa)) is a DNA-binding region (ompR/PhoB-type).

Phosphorylated and dephosphorylated by MprB.

The protein resides in the cytoplasm. In terms of biological role, member of the two-component regulatory system MprB/MprA which contributes to maintaining a balance among several systems involved in stress resistance and is required for establishment and maintenance of persistent infection in the host. Functions as a transcriptional regulator that recognizes a 19-bp nucleotide motif comprizing two loosely conserved 8-bp direct DNA-binding motif repeats separated by a 3-bp spacer region. The polypeptide is Response regulator MprA (mprA) (Mycobacterium tuberculosis (strain ATCC 25177 / H37Ra)).